Consider the following 251-residue polypeptide: Protein unc-119 homolog B (251 aa).

Residues 1 to 13 (MSGSNPKAATAGS) show a composition bias toward polar residues. A disordered region spans residues 1 to 56 (MSGSNPKAATAGSQAGPGGLVAGKEEKKKAGGGVLNRLKARRQGPPHTPDDGSGAA). Serine 2 is modified (N-acetylserine). Position 24 is an N6-acetyllysine (lysine 24). Tyrosine 142 serves as a coordination point for tetradecanoate.

Belongs to the PDE6D/unc-119 family. As to quaternary structure, found in a complex with ARL3, RP2 and UNC119B; RP2 induces hydrolysis of GTP ARL3 in the complex, leading to the release of UNC119B. Interacts with NPHP3 (when myristoylated). Interacts with CYS1 (when myristoylated). Interacts with MACIR; interaction only takes place when UNC119B is not liganded with myristoylated proteins.

It localises to the cell projection. It is found in the cilium. Myristoyl-binding protein that acts as a cargo adapter: specifically binds the myristoyl moiety of a subset of N-terminally myristoylated proteins and is required for their localization. Binds myristoylated NPHP3 and plays a key role in localization of NPHP3 to the primary cilium membrane. Does not bind all myristoylated proteins. Probably plays a role in trafficking proteins in photoreceptor cells. The protein is Protein unc-119 homolog B (Unc119b) of Mus musculus (Mouse).